Reading from the N-terminus, the 275-residue chain is Shikimate dehydrogenase (NADP(+)) (275 aa).

Shikimate-binding positions include 19–21 (SIS) and threonine 66. Lysine 70 functions as the Proton acceptor in the catalytic mechanism. Residues asparagine 91 and aspartate 106 each coordinate shikimate. Residues 129 to 133 (GAGGA), 153 to 158 (NRTYGR), and isoleucine 219 contribute to the NADP(+) site. Shikimate is bound at residue tyrosine 221. Residue glycine 242 coordinates NADP(+).

This sequence belongs to the shikimate dehydrogenase family. In terms of assembly, homodimer.

The catalysed reaction is shikimate + NADP(+) = 3-dehydroshikimate + NADPH + H(+). Its pathway is metabolic intermediate biosynthesis; chorismate biosynthesis; chorismate from D-erythrose 4-phosphate and phosphoenolpyruvate: step 4/7. Functionally, involved in the biosynthesis of the chorismate, which leads to the biosynthesis of aromatic amino acids. Catalyzes the reversible NADPH linked reduction of 3-dehydroshikimate (DHSA) to yield shikimate (SA). In Dictyoglomus thermophilum (strain ATCC 35947 / DSM 3960 / H-6-12), this protein is Shikimate dehydrogenase (NADP(+)).